The chain runs to 172 residues: MPLRASEHAYRPLGPGTPPMRARLPAAAWVGVGTIIGGVVIIAALVLVPSRASWALSPCDSGWHEFNLGCISWDPTPMEHEQAVGGCSAPATLIPRAAAKQLAAVARVQSARSSGYWWVSGDGIRARLRLVDGVGGIDQFCEEPALRICYYPRSPGGFVQFVTSTRNALGLP.

Residues 1-27 are Intravirion-facing; sequence MPLRASEHAYRPLGPGTPPMRARLPAA. The helical; Signal-anchor for type II membrane protein transmembrane segment at 28-48 threads the bilayer; sequence AWVGVGTIIGGVVIIAALVLV. At 49–172 the chain is on the virion surface side; the sequence is PSRASWALSP…TSTRNALGLP (124 aa).

It belongs to the herpesviridae HHV-1 UL45 family.

It localises to the virion membrane. In terms of biological role, important virulence factor of HSV neurotropism. Seems to be required for glycoprotein B-induced fusion. Dispensable for growth in vitro. The protein is Envelope protein UL45 of Human herpesvirus 1 (strain KOS) (HHV-1).